The sequence spans 513 residues: Sucrose transport protein SUC1 (513 aa).

The span at 1-11 (MGAYETEKPTK) shows a compositional bias: basic and acidic residues. A disordered region spans residues 1–26 (MGAYETEKPTKDAAALETQSPEDFDQ). Topologically, residues 1 to 32 (MGAYETEKPTKDAAALETQSPEDFDQPSPLRK) are cytoplasmic. At S20 the chain carries Phosphoserine. Residues 33 to 53 (IISVASIAAGVQFGWALQLSL) traverse the membrane as a helical segment. At 54-67 (LTPYVQLLGIPHKW) the chain is on the extracellular side. Residues 68–88 (SSLIWLCGPVSGMIVQPIVGF) form a helical membrane-spanning segment. Over 89–101 (HSDRCRSKFGRRR) the chain is Cytoplasmic. The helical transmembrane segment at 102–122 (PFIATGAALVAVAVFLIGYAA) threads the bilayer. Topologically, residues 123–139 (DFGYKMGDKLEEKVKVR) are extracellular. The helical transmembrane segment at 140-160 (AIGIFALGFWILDVANNTLQG) threads the bilayer. The Cytoplasmic portion of the chain corresponds to 161–178 (PCRAFLADLAAGDAKRTR). Residues 179 to 199 (VANAFFSFFMAVGNVLGYAAG) form a helical membrane-spanning segment. The Extracellular portion of the chain corresponds to 200–224 (SYTNLHKMFPFTMTKACDIYCANLK). The chain crosses the membrane as a helical span at residues 225-245 (TCFFLSITLLLIVTVTSLWYV). At 246-282 (NDKQWSPPPRNADDDEKTSSVPLFGEIFGAFKVMKRP) the chain is on the cytoplasmic side. The chain crosses the membrane as a helical span at residues 283-303 (MWMLLIVTALNWIAWFPFLLF). Over 304–334 (DTDWMGREVFGGDSDGNERSKKLYSLGVQSG) the chain is Extracellular. A helical membrane pass occupies residues 335–355 (AMGLMFNSIVLGFMSLGVEWI). The Cytoplasmic segment spans residues 356-365 (GRKLGGAKRL). The helical transmembrane segment at 366 to 386 (WGIVNFILAAGLAMTVLVTKF) threads the bilayer. Residues 387–408 (AEDHRKTAGDLAGPSASVKAGA) lie on the Extracellular side of the membrane. The helical transmembrane segment at 409–429 (LSLFAVLGIPLAITFSTPFAL) threads the bilayer. At 430–441 (ASIFSSCSGAGQ) the chain is on the cytoplasmic side. The chain crosses the membrane as a helical span at residues 442–462 (GLSLGVLNLAIVIPQMIVSLG). Residues 463–474 (GGPFDALFGGGN) lie on the Extracellular side of the membrane. A helical transmembrane segment spans residues 475–495 (LPAFIVAAIAAAISGVLALTV). The Cytoplasmic portion of the chain corresponds to 496–513 (LPSPPPDAPKATTMGGFH).

Belongs to the glycoside-pentoside-hexuronide (GPH) cation symporter transporter (TC 2.A.2.4) family. Expressed in flowers (at protein level). Highly expressed in pollen. Expressed in pollen tubes and root vascular cylinder, pericycle and endodermis.

The protein resides in the membrane. It carries out the reaction sucrose(out) + H(+)(out) = sucrose(in) + H(+)(in). It functions in the pathway glycan biosynthesis; sucrose metabolism. Inhibited by DEPC, protonophores (e.g. dinitrophenol and carbonyl cyanide m-chlorophenyl-hydrazone (CCCP)), and SH group inhibitors (e.g. N-ethylmaleimide (NEM) and p-chloromercuriphenyl sulphonic acid (PCMPS)). In terms of biological role, responsible for the transport of sucrose into the cell, with the concomitant uptake of protons (symport system). This transport is both voltage- and energy-dependent. Can also transport other glucosides such as maltose, alpha-phenylglucoside and beta-phenylglucoside. May also transport biotin. Required for normal pollen germination and anthocyanin accumulation induced by sucrose. This chain is Sucrose transport protein SUC1, found in Arabidopsis thaliana (Mouse-ear cress).